Here is a 406-residue protein sequence, read N- to C-terminus: Vacuole membrane protein 1 (406 aa).

Basic and acidic residues predominate over residues 1–21 (MAENGKNCDQRRVAMNKEHHN). Positions 1–35 (MAENGKNCDQRRVAMNKEHHNGNFTDPSSVNEKKR) are disordered. Position 2 is an N-acetylalanine (Ala2). Residues 2–43 (AENGKNCDQRRVAMNKEHHNGNFTDPSSVNEKKRREREERQN) are Cytoplasmic-facing. A helical membrane pass occupies residues 44–64 (IVLWRQPLITLQYFSLEILVI). Residues 65–77 (LKEWTSKLWHRQS) lie on the Extracellular side of the membrane. A helical transmembrane segment spans residues 78 to 98 (IVVSFLLLLAVLIATYYVEGV). Residues 99–109 (HQQYVQRIEKQ) lie on the Cytoplasmic side of the membrane. A helical transmembrane segment spans residues 110-130 (FLLYAYWIGLGILSSVGLGTG). Over 131–250 (LHTFLLYLGP…ASRAKLAVQK (120 aa)) the chain is Extracellular. Residues 173 to 316 (GTEGTISLWS…FVIITFSKHI (144 aa)) form a VTT domain region. A helical membrane pass occupies residues 251-271 (LVQKVGFFGILACASIPNPLF). The Cytoplasmic portion of the chain corresponds to 272–273 (DL). Residues 274–294 (AGITCGHFLVPFWTFFGATLI) traverse the membrane as a helical segment. Residues 295–305 (GKAIIKMHIQK) are Extracellular-facing. A helical transmembrane segment spans residues 306–326 (IFVIITFSKHIVEQMVAFIGA). The Cytoplasmic portion of the chain corresponds to 327–363 (VPGIGPSLQKPFQEYLEAQRQKLHHKSEMGTPQGENW). Residues 364–384 (LSWMFEKLVVVMVCYFILSII) form a helical membrane-spanning segment. The Extracellular segment spans residues 385–406 (NSMAQSYAKRIQQRLNSEEKTK).

It belongs to the VMP1 family. Interacts with BECN1. Interacts with TJP1. Interacts with TP53INP2. Interacts with TMEM41B. Interacts with ATP2A2, PLN and SLN; competes with PLN and SLN to prevent them from forming an inhibitory complex with ATP2A2. Interacts with ATG2A.

It is found in the endoplasmic reticulum-Golgi intermediate compartment membrane. The protein localises to the cell membrane. The protein resides in the vacuole membrane. Its subcellular location is the endoplasmic reticulum membrane. The enzyme catalyses a 1,2-diacyl-sn-glycero-3-phospho-L-serine(in) = a 1,2-diacyl-sn-glycero-3-phospho-L-serine(out). It carries out the reaction cholesterol(in) = cholesterol(out). It catalyses the reaction a 1,2-diacyl-sn-glycero-3-phosphocholine(in) = a 1,2-diacyl-sn-glycero-3-phosphocholine(out). The catalysed reaction is a 1,2-diacyl-sn-glycero-3-phosphoethanolamine(in) = a 1,2-diacyl-sn-glycero-3-phosphoethanolamine(out). Functionally, phospholipid scramblase involved in lipid homeostasis and membrane dynamics processes. Has phospholipid scramblase activity toward cholesterol and phosphatidylserine, as well as phosphatidylethanolamine and phosphatidylcholine. Required for autophagosome formation: participates in early stages of autophagosome biogenesis at the endoplasmic reticulum (ER) membrane by reequilibrating the leaflets of the ER as lipids are extracted by ATG2 (ATG2A or ATG2B) to mediate autophagosome assembly. Regulates ATP2A2 activity to control ER-isolation membrane contacts for autophagosome formation. In addition to autophagy, involved in other processes in which phospholipid scramblase activity is required. Modulates ER contacts with lipid droplets, mitochondria and endosomes. Plays an essential role in formation of cell junctions. Upon stress such as bacterial and viral infection, promotes formation of cytoplasmic vacuoles followed by cell death. Involved in the cytoplasmic vacuolization of acinar cells during the early stage of acute pancreatitis. (Microbial infection) Host factor required for infection by all flaviviruses tested such as Zika virus and Yellow fever virus. Probably required post-entry of the virus to facilitate the ER membrane remodeling necessary to form replication organelles. In Homo sapiens (Human), this protein is Vacuole membrane protein 1.